The primary structure comprises 211 residues: Large ribosomal subunit protein uL3 (211 aa).

A disordered region spans residues 126 to 147 (HGQSRGPMAHGSRYHRRPGSMG).

It belongs to the universal ribosomal protein uL3 family. In terms of assembly, part of the 50S ribosomal subunit. Forms a cluster with proteins L14 and L19.

One of the primary rRNA binding proteins, it binds directly near the 3'-end of the 23S rRNA, where it nucleates assembly of the 50S subunit. This chain is Large ribosomal subunit protein uL3, found in Geobacillus thermodenitrificans (strain NG80-2).